A 108-amino-acid chain; its full sequence is uncharacterized protein (108 aa).

Residues 1–23 (MVDELEKNQVQPQETEENKENAL) form a disordered region.

This is an uncharacterized protein from Ureaplasma parvum serovar 3 (strain ATCC 700970).